We begin with the raw amino-acid sequence, 141 residues long: Protein GAT3 (141 aa).

The GATA-type zinc-finger motif lies at 72–98 (CPQCAVIKTSPQWREGPDGEVTLCNAC).

This chain is Protein GAT3 (GAT3), found in Saccharomyces cerevisiae (strain ATCC 204508 / S288c) (Baker's yeast).